Reading from the N-terminus, the 289-residue chain is ADP-dependent (S)-NAD(P)H-hydrate dehydratase (289 aa).

One can recognise a YjeF C-terminal domain in the interval 9 to 286 (VTAAALRAQP…PEVPGILDRL (278 aa)). Residues Ala-44 and His-160 each coordinate (6S)-NADPHX. AMP is bound by residues 197 to 201 (KGADS) and Gly-226. (6S)-NADPHX is bound at residue Asp-227.

The protein belongs to the NnrD/CARKD family. Homotetramer. The cofactor is Mg(2+).

The enzyme catalyses (6S)-NADHX + ADP = AMP + phosphate + NADH + H(+). It carries out the reaction (6S)-NADPHX + ADP = AMP + phosphate + NADPH + H(+). Functionally, catalyzes the dehydration of the S-form of NAD(P)HX at the expense of ADP, which is converted to AMP. Together with NAD(P)HX epimerase, which catalyzes the epimerization of the S- and R-forms, the enzyme allows the repair of both epimers of NAD(P)HX, a damaged form of NAD(P)H that is a result of enzymatic or heat-dependent hydration. The chain is ADP-dependent (S)-NAD(P)H-hydrate dehydratase from Xanthomonas campestris pv. campestris (strain ATCC 33913 / DSM 3586 / NCPPB 528 / LMG 568 / P 25).